A 479-amino-acid polypeptide reads, in one-letter code: (R)-1-hydroxy-2-aminoethylphosphonate ammonia-lyase (479 aa).

At Lys317 the chain carries N6-(pyridoxal phosphate)lysine.

The protein belongs to the class-III pyridoxal-phosphate-dependent aminotransferase family. The cofactor is pyridoxal 5'-phosphate.

It carries out the reaction (1R)-(2-amino-1-hydroxyethyl)phosphonate = phosphonoacetaldehyde + NH4(+). Involved in phosphonate degradation. Functions as a lyase that catalyzes an elimination reaction on the naturally occurring compound (R)-1-hydroxy-2-aminoethylphosphonate ((R)-HAEP), releasing ammonia and generating phosphonoacetaldehyde (PAA), which can be then hydrolyzed by PhnX, encoded by an adjacent gene. Thus, catalyzes a reaction that serves to funnel (R)-HAEP into the hydrolytic pathway for aminoethylphosphonate (AEP, the most common biogenic phosphonate) degradation, expanding the scope and the usefulness of the pathway itself. Is not active toward the (S) enantiomer of HAEP or other HAEP-related compounds such as ethanolamine and D,L-isoserine, indicating a very high substrate specificity. The polypeptide is (R)-1-hydroxy-2-aminoethylphosphonate ammonia-lyase (Vibrio splendidus (strain 12B01)).